A 378-amino-acid chain; its full sequence is MAEFVRAEVLGTKFEYTTRYVNPQPIGMGSFGLVCSAFDQITQQPVALKKIMKPFDSSSLAKRTYREIRLLKYLRHENLICMRDIFISPLEDIYIATELLGTDLGRLLSIKPLDSKFSQYFIYQILRGLKYIHSANVIHRDLKPTNILINENCDLKICDFGLARLQEPQMTGYVATRYYRAPEIMLTWQRYGVQVDVWSAGCILAEMLRGKPLFPGKDHVHQFHLITNILGNPPDAVIEKITSKNTVNFVKSLPSREPRDLSTVVPKDTDFDAIDLLKKMLVIDPDTRISAQDALRHPYLAPYHDPTDEPVASGPFDWSFDSADFPKETSKIMIYSEVLDYLNVDNPADPAPFDPSTPFDPSALEREFSEFLSDSGQT.

A Protein kinase domain is found at 20–300; it reads YVNPQPIGMG…AQDALRHPYL (281 aa). ATP-binding positions include 26-34 and Lys49; that span reads IGMGSFGLV. Asp141 (proton acceptor) is an active-site residue.

It belongs to the protein kinase superfamily. Ser/Thr protein kinase family. MAP kinase subfamily. Mg(2+) serves as cofactor.

It is found in the nucleus. The enzyme catalyses L-seryl-[protein] + ATP = O-phospho-L-seryl-[protein] + ADP + H(+). The catalysed reaction is L-threonyl-[protein] + ATP = O-phospho-L-threonyl-[protein] + ADP + H(+). Activated by threonine and tyrosine phosphorylation. Mitogen-activated protein kinase (MAPK), part of the high-osmolarity glycerol (HOG) pathway. With sakA, plays a role in the osmotic and oxidative stress responses. Involved in paradoxical growth, the cell wall integrity (CWI) pathway and biofilm formation. SakA and mpkC collaborate during virulence and mpkC could act by modulating sakA activity upon exposure to several types of stresses and during cell wall biosynthesis. This Aspergillus fumigatus (strain CBS 144.89 / FGSC A1163 / CEA10) (Neosartorya fumigata) protein is Mitogen-activated protein kinase mpkC.